A 329-amino-acid chain; its full sequence is GMP reductase (329 aa).

The active-site Thioimidate intermediate is the Cys178. Residue 207–230 (IIADGGIRNNGDIAKSIRFGATMC) participates in NADP(+) binding.

It belongs to the IMPDH/GMPR family. GuaC type 2 subfamily.

The catalysed reaction is IMP + NH4(+) + NADP(+) = GMP + NADPH + 2 H(+). Functionally, catalyzes the irreversible NADPH-dependent deamination of GMP to IMP. It functions in the conversion of nucleobase, nucleoside and nucleotide derivatives of G to A nucleotides, and in maintaining the intracellular balance of A and G nucleotides. This is GMP reductase from Lacticaseibacillus casei (strain BL23) (Lactobacillus casei).